Here is a 247-residue protein sequence, read N- to C-terminus: Probable transcriptional regulatory protein Gbem_3313 (247 aa).

Belongs to the TACO1 family.

It localises to the cytoplasm. The chain is Probable transcriptional regulatory protein Gbem_3313 from Citrifermentans bemidjiense (strain ATCC BAA-1014 / DSM 16622 / JCM 12645 / Bem) (Geobacter bemidjiensis).